The chain runs to 110 residues: Toxin HigB-2 (110 aa).

Its function is as follows. Toxic component of a type II toxin-antitoxin (TA) system. Inhibits translation by cleavage of mRNA. This chain is Toxin HigB-2 (higB-2), found in Vibrio cholerae serotype O1 (strain ATCC 39315 / El Tor Inaba N16961).